Here is a 102-residue protein sequence, read N- to C-terminus: C-X-C motif chemokine 10 (102 aa).

A signal peptide spans 1 to 19; the sequence is MNKSGFLIFCLILLTLSQG. Arginine 24 bears the Citrulline mark. Disulfide bonds link cysteine 28/cysteine 55 and cysteine 30/cysteine 72.

It belongs to the intercrine alpha (chemokine CxC) family. In terms of assembly, monomer, dimer, and tetramer. Interacts with CXCR3 (via N-terminus).

The protein resides in the secreted. Its function is as follows. Pro-inflammatory cytokine that is involved in a wide variety of processes such as chemotaxis, differentiation, and activation of peripheral immune cells, regulation of cell growth, apoptosis and modulation of angiostatic effects. Plays thereby an important role during viral infections by stimulating the activation and migration of immune cells to the infected sites. Mechanistically, binding of CXCL10 to the CXCR3 receptor activates G protein-mediated signaling and results in downstream activation of phospholipase C-dependent pathway, an increase in intracellular calcium production and actin reorganization. In turn, recruitment of activated Th1 lymphocytes occurs at sites of inflammation. Activation of the CXCL10/CXCR3 axis also plays an important role in neurons in response to brain injury for activating microglia, the resident macrophage population of the central nervous system, and directing them to the lesion site. This recruitment is an essential element for neuronal reorganization. This Bos taurus (Bovine) protein is C-X-C motif chemokine 10 (CXCL10).